The primary structure comprises 515 residues: Hyccin (515 aa).

Residues 358–378 (STSQSALSNSSNTSSKNLLGK) show a composition bias toward low complexity. 2 disordered regions span residues 358–410 (STSQ…TQRA) and 491–515 (TDLP…LSTD). A compositionally biased stretch (basic and acidic residues) spans 389–403 (AGREKEGETCREHLS). Over residues 498–515 (KQPNQQRPPSISITLSTD) the composition is skewed to polar residues.

Belongs to the Hyccin family. In terms of assembly, component of a phosphatidylinositol 4-kinase (PI4K) complex.

The protein resides in the cytoplasm. The protein localises to the cytosol. It is found in the cell membrane. Functionally, component of a complex required to localize phosphatidylinositol 4-kinase (PI4K) to the plasma membrane. The complex acts as a regulator of phosphatidylinositol 4-phosphate (PtdIns(4)P) synthesis. The chain is Hyccin (HYCC1) from Gallus gallus (Chicken).